The sequence spans 665 residues: Methionine--tRNA ligase (665 aa).

The 'HIGH' region motif lies at 12-22 (YYPSGKLHIGS). Residues 308 to 312 (KMSKS) carry the 'KMSKS' region motif. Lys-311 lines the ATP pocket. The 104-residue stretch at 562 to 665 (TFDAVEIRVA…SSVPNGSIIG (104 aa)) folds into the tRNA-binding domain.

The protein belongs to the class-I aminoacyl-tRNA synthetase family. MetG type 2B subfamily. In terms of assembly, homodimer.

Its subcellular location is the cytoplasm. It catalyses the reaction tRNA(Met) + L-methionine + ATP = L-methionyl-tRNA(Met) + AMP + diphosphate. In terms of biological role, is required not only for elongation of protein synthesis but also for the initiation of all mRNA translation through initiator tRNA(fMet) aminoacylation. The polypeptide is Methionine--tRNA ligase (metG) (Streptococcus pyogenes serotype M3 (strain SSI-1)).